Here is a 416-residue protein sequence, read N- to C-terminus: Serine hydroxymethyltransferase (416 aa).

(6S)-5,6,7,8-tetrahydrofolate-binding positions include Leu121 and 125–127 (GHL). At Lys229 the chain carries N6-(pyridoxal phosphate)lysine. (6S)-5,6,7,8-tetrahydrofolate contacts are provided by residues Glu245 and 354 to 356 (SPF).

It belongs to the SHMT family. In terms of assembly, homodimer. Requires pyridoxal 5'-phosphate as cofactor.

Its subcellular location is the cytoplasm. The catalysed reaction is (6R)-5,10-methylene-5,6,7,8-tetrahydrofolate + glycine + H2O = (6S)-5,6,7,8-tetrahydrofolate + L-serine. Its pathway is one-carbon metabolism; tetrahydrofolate interconversion. It participates in amino-acid biosynthesis; glycine biosynthesis; glycine from L-serine: step 1/1. Catalyzes the reversible interconversion of serine and glycine with tetrahydrofolate (THF) serving as the one-carbon carrier. This reaction serves as the major source of one-carbon groups required for the biosynthesis of purines, thymidylate, methionine, and other important biomolecules. Also exhibits THF-independent aldolase activity toward beta-hydroxyamino acids, producing glycine and aldehydes, via a retro-aldol mechanism. The chain is Serine hydroxymethyltransferase from Aliivibrio fischeri (strain ATCC 700601 / ES114) (Vibrio fischeri).